Reading from the N-terminus, the 257-residue chain is Ribosomal large subunit pseudouridine synthase B (257 aa).

The S4 RNA-binding domain occupies 3-63 (AKIQKILSDL…KKKIIVKRNK (61 aa)). Residue aspartate 109 is the Nucleophile of the active site.

It belongs to the pseudouridine synthase RsuA family.

The catalysed reaction is uridine(2605) in 23S rRNA = pseudouridine(2605) in 23S rRNA. In terms of biological role, responsible for synthesis of pseudouridine from uracil-2605 in 23S ribosomal RNA. In Buchnera aphidicola subsp. Schizaphis graminum (strain Sg), this protein is Ribosomal large subunit pseudouridine synthase B (rluB).